Here is a 343-residue protein sequence, read N- to C-terminus: Polyprenyl transferase spyF (343 aa).

Helical transmembrane passes span 38 to 58, 62 to 82, 92 to 112, 138 to 158, 170 to 190, 241 to 261, 273 to 293, and 311 to 331; these read WLAV…SHPL, VSVW…PASI, LLCL…NDWI, GFIW…STIL, LYIY…AIGW, AYVA…GLVL, SGWL…HQLL, and FALG…SSGM.

Belongs to the UbiA prenyltransferase family. It depends on Mg(2+) as a cofactor.

It is found in the membrane. The enzyme catalyses triacetate lactone + (2E,6E,10E)-geranylgeranyl diphosphate = (2E,6E,10E)-geranylgeranyl-triacetate lactone + diphosphate. The protein operates within secondary metabolite biosynthesis; terpenoid biosynthesis. Polyprenyl transferase; part of the gene cluster that mediates the biosynthesis of meroterpenoids called sartorypyrones. Within the pathway, spyF catalyzes the prenylation of triacetic acid lactone (TAL) to produce geranylgeranyl-triacetate lactone. The biosynthesis of sartorypyrones begins with the production of triacetic acid lactone (TAL) by the NR-PKS spyA using one molecule of acetyl-CoA and two molecules of malonyl-CoA. The prenyltransferase spyF then conjugates geranylgeranyl pyrophosphate (GGPP) to TAL to form geranylgeranyl-triacetate lactone, for which the pathway-specific geranylgeranyl pyrophosphate synthase (GGPS) spyE is required to provide GGPP. Subsequently, geranylgeranyl-triacetate lactone is epoxidized at the terminal olein by the FAD-dependent monooxygenase spyC, followed by cyclization of the terpenoid component catalyzed by the terpene cyclase spyD to produce both the bicyclic sartorypyrone F and the monocyclic sartorypyrone D. Finally, the last step of the biosynthesis involves the acetylation of the meroterpenoids sartorypyrones D and F by the acetyltransferase SpyB to produce sartorypyrones A and G, respectively. This is Polyprenyl transferase spyF from Aspergillus fumigatus (strain ATCC MYA-4609 / CBS 101355 / FGSC A1100 / Af293) (Neosartorya fumigata).